The primary structure comprises 79 residues: D-alanyl carrier protein (79 aa).

The Carrier domain occupies Met-1–Glu-77. An O-(pantetheine 4'-phosphoryl)serine modification is found at Ser-35.

It belongs to the DltC family. 4'-phosphopantetheine is transferred from CoA to a specific serine of apo-DCP.

The protein localises to the cytoplasm. It functions in the pathway cell wall biogenesis; lipoteichoic acid biosynthesis. Carrier protein involved in the D-alanylation of lipoteichoic acid (LTA). The loading of thioester-linked D-alanine onto DltC is catalyzed by D-alanine--D-alanyl carrier protein ligase DltA. The DltC-carried D-alanyl group is further transferred to cell membrane phosphatidylglycerol (PG) by forming an ester bond, probably catalyzed by DltD. D-alanylation of LTA plays an important role in modulating the properties of the cell wall in Gram-positive bacteria, influencing the net charge of the cell wall. This Lactobacillus acidophilus (strain ATCC 700396 / NCK56 / N2 / NCFM) protein is D-alanyl carrier protein.